The primary structure comprises 283 residues: Elongation factor Ts (283 aa).

Positions 80–83 are involved in Mg(2+) ion dislocation from EF-Tu; the sequence is TDFV.

It belongs to the EF-Ts family.

It localises to the cytoplasm. Associates with the EF-Tu.GDP complex and induces the exchange of GDP to GTP. It remains bound to the aminoacyl-tRNA.EF-Tu.GTP complex up to the GTP hydrolysis stage on the ribosome. This Actinobacillus pleuropneumoniae serotype 5b (strain L20) protein is Elongation factor Ts.